The following is a 100-amino-acid chain: uncharacterized protein (100 aa).

Residues 78 to 100 (NNGNLDFKGRADERRQPVSNLRM) form a disordered region. Residues 84–93 (FKGRADERRQ) show a composition bias toward basic and acidic residues.

This is an uncharacterized protein from Saccharomyces cerevisiae (strain ATCC 204508 / S288c) (Baker's yeast).